The primary structure comprises 569 residues: Sulfite reductase [NADPH] hemoprotein beta-component (569 aa).

[4Fe-4S] cluster is bound by residues Cys433, Cys439, Cys478, and Cys482. Cys482 is a binding site for siroheme.

The protein belongs to the nitrite and sulfite reductase 4Fe-4S domain family. As to quaternary structure, alpha(8)-beta(8). The alpha component is a flavoprotein, the beta component is a hemoprotein. Siroheme is required as a cofactor. The cofactor is [4Fe-4S] cluster.

The catalysed reaction is hydrogen sulfide + 3 NADP(+) + 3 H2O = sulfite + 3 NADPH + 4 H(+). It functions in the pathway sulfur metabolism; hydrogen sulfide biosynthesis; hydrogen sulfide from sulfite (NADPH route): step 1/1. Its function is as follows. Component of the sulfite reductase complex that catalyzes the 6-electron reduction of sulfite to sulfide. This is one of several activities required for the biosynthesis of L-cysteine from sulfate. The protein is Sulfite reductase [NADPH] hemoprotein beta-component of Buchnera aphidicola subsp. Acyrthosiphon pisum (strain 5A).